Reading from the N-terminus, the 497-residue chain is Pancreatic alpha-amylase (497 aa).

Glutamine 1 is subject to Pyrrolidone carboxylic acid. 3 disulfide bridges follow: cysteine 28–cysteine 86, cysteine 70–cysteine 115, and cysteine 141–cysteine 160. Residues asparagine 100, arginine 158, and aspartate 167 each coordinate Ca(2+). Arginine 195 is a chloride binding site. Aspartate 197 functions as the Nucleophile in the catalytic mechanism. Histidine 201 lines the Ca(2+) pocket. Residue glutamate 233 is the Proton donor of the active site. Residues asparagine 298 and arginine 337 each coordinate chloride. 2 cysteine pairs are disulfide-bonded: cysteine 379-cysteine 385 and cysteine 451-cysteine 463.

This sequence belongs to the glycosyl hydrolase 13 family. In terms of assembly, monomer. It depends on Ca(2+) as a cofactor. The cofactor is chloride.

It localises to the secreted. The protein resides in the extracellular space. It catalyses the reaction Endohydrolysis of (1-&gt;4)-alpha-D-glucosidic linkages in polysaccharides containing three or more (1-&gt;4)-alpha-linked D-glucose units.. The protein is Pancreatic alpha-amylase of Struthio camelus (Common ostrich).